The sequence spans 468 residues: Argininosuccinate lyase (468 aa).

The protein belongs to the lyase 1 family. Argininosuccinate lyase subfamily.

It localises to the cytoplasm. It catalyses the reaction 2-(N(omega)-L-arginino)succinate = fumarate + L-arginine. Its pathway is amino-acid biosynthesis; L-arginine biosynthesis; L-arginine from L-ornithine and carbamoyl phosphate: step 3/3. The chain is Argininosuccinate lyase from Hahella chejuensis (strain KCTC 2396).